Consider the following 428-residue polypeptide: MAKTVAYFYDPDVGNFHYGAGHPMKPHRLALTHSLVLHYGLYKKMIVFKPYQASQHDMCRFHSEDYIDFLQRVSPNNMQGFTKSLNAFNVGDDCPVFPGLFEFCSRYTGASLQGATQLNNKICDIAINWAGGLHHAKKFEASGFCYVNDIVIGILELLKYHPRVLYIDIDIHHGDGVQEAFYLTDRVMTVSFHKYGNYFFPGTGDMYEVGAESGRYYALNVPLRDGIDDQSYKHLFQPVINQVVDYYQPTCIVLQCGADSLGRDRLGCFNLSIRGHGECVEYVKSFNIPLLVLGGGGYTVRNVARCWTYETSLLVDEAISEELPYSEYFEYFAPDFTLHPDVSTRIENQNSRQYLDQIRQTIFENLKMLNHAPSVQIHDVPSDLLSYDRTDEPDPEERGSEENYSRPEAANEFYDGDHDNDKESDVEI.

The tract at residues Lys3–Asp316 is histone deacetylase. Residues His17, Gly21, and Lys25 each coordinate 1D-myo-inositol 1,4,5,6-tetrakisphosphate. His135 is a catalytic residue. Zn(2+) contacts are provided by Asp170, His172, and Asp259. Arg265 lines the 1D-myo-inositol 1,4,5,6-tetrakisphosphate pocket. Residues Leu385–Ile428 form a disordered region. Composition is skewed to basic and acidic residues over residues Ser386–Ser405 and Asp415–Ile428.

Belongs to the histone deacetylase family. HD type 1 subfamily.

It localises to the nucleus. Its subcellular location is the chromosome. The protein localises to the cytoplasm. It is found in the cytosol. The catalysed reaction is N(6)-acetyl-L-lysyl-[histone] + H2O = L-lysyl-[histone] + acetate. It catalyses the reaction N(6)-acetyl-L-lysyl-[protein] + H2O = L-lysyl-[protein] + acetate. It carries out the reaction N(6)-(2E)-butenoyl-L-lysyl-[protein] + H2O = (2E)-2-butenoate + L-lysyl-[protein]. The enzyme catalyses N(6)-(2-hydroxyisobutanoyl)-L-lysyl-[protein] + H2O = 2-hydroxy-2-methylpropanoate + L-lysyl-[protein]. The catalysed reaction is N(6)-[(S)-lactoyl]-L-lysyl-[protein] + H2O = (S)-lactate + L-lysyl-[protein]. With respect to regulation, inositol tetraphosphate (1D-myo-inositol 1,4,5,6-tetrakisphosphate) promotes the histone deacetylase activity by acting as an intermolecular glue between HDAC3 and N-Cor repressor complex components. Functionally, histone deacetylase that catalyzes the deacetylation of lysine residues on the N-terminal part of the core histones (H2A, H2B, H3 and H4), and some other non-histone substrates. Histone deacetylation gives a tag for epigenetic repression and plays an important role in transcriptional regulation, cell cycle progression and developmental events. Histone deacetylases act via the formation of large multiprotein complexes, such as N-Cor repressor complex, which activate the histone deacetylase activity. Participates in the BCL6 transcriptional repressor activity by deacetylating the H3 'Lys-27' (H3K27) on enhancer elements, antagonizing EP300 acetyltransferase activity and repressing proximal gene expression. Also functions as a deacetylase for non-histone targets. In addition to protein deacetylase activity, also acts as a protein-lysine deacylase by recognizing other acyl groups: catalyzes removal of (2E)-butenoyl (crotonyl), lactoyl (lactyl) and 2-hydroxyisobutanoyl (2-hydroxyisobutyryl) acyl groups from lysine residues, leading to protein decrotonylation, delactylation and de-2-hydroxyisobutyrylation, respectively. The polypeptide is Histone deacetylase 3 (HDAC3) (Gallus gallus (Chicken)).